A 223-amino-acid chain; its full sequence is Fibroblast growth factor-binding protein 2 (223 aa).

The signal sequence occupies residues 1 to 19; that stretch reads MKFVPCLLLVTLSCLGTLG. The tract at residues 23-45 is disordered; it reads RQKQGSTGEEFHFQTGGRDSCTM. Disulfide bonds link Cys43–Cys63, Cys72–Cys106, and Cys81–Cys117. The tract at residues 120–201 is disordered; it reads AGPQAHMQQV…PGGNEEAKKK (82 aa). Residues 125-144 show a composition bias toward polar residues; it reads HMQQVTSSLKGSPEPNQQPE. Low complexity predominate over residues 175–186; the sequence is AKPTTRPTAKPT. Cysteines 206 and 214 form a disulfide.

It belongs to the fibroblast growth factor-binding protein family. In terms of tissue distribution, expressed in serum, peripheral leukocytes and cytotoxic T-lymphocytes, but not in granulocytes and monocytes (at protein level).

The protein resides in the secreted. Its subcellular location is the extracellular space. This Homo sapiens (Human) protein is Fibroblast growth factor-binding protein 2 (FGFBP2).